A 646-amino-acid chain; its full sequence is EF-hand calcium-binding domain-containing protein 6 (646 aa).

6 consecutive EF-hand domains span residues 1 to 27 (FLET…FDIP), 28 to 63 (LTPR…NYSP), 109 to 144 (DCYQ…CGCS), 214 to 249 (SSQL…FCHK), 321 to 356 (SHYH…NVQI), and 357 to 392 (LTDE…ERAA). The residue at position 29 (threonine 29) is a Phosphothreonine. The interval 390–452 (RAATPTATGD…TTAIPGTPPL (63 aa)) is disordered. The segment covering 432–446 (KPQSHPCTAASTTAI) has biased composition (polar residues). Serine 435 is subject to Phosphoserine. 2 positions are modified to phosphothreonine: threonine 439 and threonine 449. Residues 448 to 646 (GTPPLQNCDP…YNDFLRAFLQ (199 aa)) form an interaction with PARK7 region. EF-hand domains lie at 468-503 (GCWR…FNLD), 504-539 (ISKE…LLKA), 579-614 (HCWR…YSIN), and 615-646 (LSEE…AFLQ). The segment at 552–646 (NAHKMKDSGA…YNDFLRAFLQ (95 aa)) is interaction with AR.

Microtubule inner protein component of sperm flagellar doublet microtubules. Binds PARK7. Part of a ternary complex containing PARK7, EFCAB6/DJBP and AR.

The protein localises to the nucleus. It is found in the cytoplasm. The protein resides in the cytoskeleton. Its subcellular location is the flagellum axoneme. In terms of biological role, negatively regulates the androgen receptor by recruiting histone deacetylase complex, and protein DJ-1 antagonizes this inhibition by abrogation of this complex. Microtubule inner protein (MIP) part of the dynein-decorated doublet microtubules (DMTs) in cilia axoneme, which is required for motile cilia beating. The protein is EF-hand calcium-binding domain-containing protein 6 (EFCAB6) of Macaca fascicularis (Crab-eating macaque).